Reading from the N-terminus, the 207-residue chain is Metalloproteinase inhibitor 1 (207 aa).

Positions Met1–Ala23 are cleaved as a signal peptide. Cys24 provides a ligand contact to Zn(2+). Positions Cys24–Val27 are involved in metalloproteinase-binding. 6 disulfides stabilise this stretch: Cys24/Cys93, Cys26/Cys122, Cys36/Cys147, Cys150/Cys197, Cys155/Cys160, and Cys168/Cys189. The NTR domain maps to Cys24–Cys147. The N-linked (GlcNAc...) asparagine glycan is linked to Asn53. The interval Glu90–Ser91 is involved in metalloproteinase-binding. Asn101 is a glycosylation site (N-linked (GlcNAc...) asparagine). Ser178 carries the phosphoserine modification.

It belongs to the protease inhibitor I35 (TIMP) family. As to quaternary structure, interacts with MMP1, MMP3, MMP10 and MMP13, but has only very low affinity for MMP14. Interacts with CD63; identified in a complex with CD63 and ITGB1. The activity of TIMP1 is dependent on the presence of disulfide bonds. In terms of processing, N-glycosylated.

It is found in the secreted. In terms of biological role, metalloproteinase inhibitor that functions by forming one to one complexes with target metalloproteinases, such as collagenases, and irreversibly inactivates them by binding to their catalytic zinc cofactor. Acts on MMP1, MMP2, MMP3, MMP7, MMP8, MMP9, MMP10, MMP11, MMP12, MMP13 and MMP16. Does not act on MMP14. Also functions as a growth factor that regulates cell differentiation, migration and cell death and activates cellular signaling cascades via CD63 and ITGB1. Plays a role in integrin signaling. The sequence is that of Metalloproteinase inhibitor 1 (TIMP1) from Oryctolagus cuniculus (Rabbit).